Here is a 151-residue protein sequence, read N- to C-terminus: Secreted RxLR effector protein 30 (151 aa).

Residues methionine 1–glycine 19 form the signal peptide. Residues arginine 38–arginine 53 carry the RxLR-dEER motif.

It belongs to the RxLR effector family.

The protein localises to the secreted. It is found in the host nucleus. Functionally, effector that acts as a broad suppressor of cell death to interrupt plant immunity. Inhibits cell death induced by cell death-inducing proteins, including the PAMP elicitor INF1 from P.infestans. This chain is Secreted RxLR effector protein 30, found in Plasmopara viticola (Downy mildew of grapevine).